We begin with the raw amino-acid sequence, 995 residues long: S1 RNA-binding domain-containing protein 1 (995 aa).

The tract at residues 23 to 81 (SFSELSSASEEDDKEDSAWEPQKKVPRSRKQPPPKESKPKRMPRVKKNAPQISDGSEVV) is disordered. Residues lysine 84 and lysine 134 each participate in a glycyl lysine isopeptide (Lys-Gly) (interchain with G-Cter in SUMO2) cross-link. The disordered stretch occupies residues 120–165 (CAAQPHTVRRTKKLKVEEETSKASNLEGESNSSETPSTSTVWGGTC). Residues 146–159 (EGESNSSETPSTST) are compositionally biased toward low complexity. Glycyl lysine isopeptide (Lys-Gly) (interchain with G-Cter in SUMO2) cross-links involve residues lysine 166, lysine 167, and lysine 183. A Glycyl lysine isopeptide (Lys-Gly) (interchain with G-Cter in SUMO1); alternate cross-link involves residue lysine 185. Residue lysine 185 forms a Glycyl lysine isopeptide (Lys-Gly) (interchain with G-Cter in SUMO2); alternate linkage. Residues 258-288 (ADSLREVQQTLEELRAVAKKVHSTIQKIKKE) adopt a coiled-coil conformation. At serine 861 the chain carries Phosphoserine. Residues 919 to 992 (GTVLTGKVEN…PRSRITLDLI (74 aa)) form the S1 motif domain. Residue lysine 955 forms a Glycyl lysine isopeptide (Lys-Gly) (interchain with G-Cter in SUMO2) linkage. Serine 964 carries the post-translational modification Phosphoserine.

This is S1 RNA-binding domain-containing protein 1 (SRBD1) from Homo sapiens (Human).